The sequence spans 372 residues: Oxoglutarate-dependent flavonoid 7-O-demethylase 1 (372 aa).

Residues 221 to 321 (GIQALRMNYY…RLSVAAFLNP (101 aa)) form the Fe2OG dioxygenase domain. The Fe cation site is built by His245, Asp247, and His302. Arg312 is a binding site for 2-oxoglutarate.

Belongs to the iron/ascorbate-dependent oxidoreductase family. In terms of assembly, monomer. Fe(2+) serves as cofactor. The cofactor is L-ascorbate. In terms of tissue distribution, accumulates in the trichomes of nevadensin-accumulating strains (e.g. cv. SD and cv. EMX-1) and in cv. SW (at protein level) but not in cv. MC.

Its subcellular location is the cytoplasm. It carries out the reaction gardenin B + 2-oxoglutarate + O2 = nevadensin + formaldehyde + succinate + CO2 + H(+). It catalyses the reaction 8-hydroxysalvigenin + 2-oxoglutarate + O2 = pilosin + formaldehyde + succinate + CO2. It participates in flavonoid metabolism. Inhibited by prohexadione-calcium, a 2-oxoglutarate-dependent dioxygenase (2-ODD) inhibitor, thus leading to a decreased abundance of nevadensin (NEV) and absence of pilosin (PIL) production, but to the accumulation of gardenin B (GARD B) and 8-hydroxysalvigenin (8-OH-SALV). Its function is as follows. Oxoglutarate-dependent dioxygenase (2-ODD) acting as a flavonoid 7-O-demethylase involved in the biosynthesis of polymethoxylated flavonoids natural products such as nevadensin and salvigenin, aroma compounds which contribute to the flavor of sweet basil, and exhibit pharmacological activities such as anti-allergic, anti-oxidant, antibacterial, anti-proliferative, and anti-inflammatory effects. Catalyzes the 7-O-demethylation of methoxylated flavones; mediates the conversion of 8-hydroxysalvigenin (8-OH-SALV) to pilosin (PIL) and of gardenin B (GARD B) to nevadensin (NEV). The chain is Oxoglutarate-dependent flavonoid 7-O-demethylase 1 from Ocimum basilicum (Sweet basil).